Reading from the N-terminus, the 448-residue chain is Adenylosuccinate synthetase (448 aa).

GTP-binding positions include 36–42 and 64–66; these read GDEGKGK and GHT. The Proton acceptor role is filled by Asp-37. Residues Asp-37 and Gly-64 each contribute to the Mg(2+) site. IMP contacts are provided by residues 37-40, 62-65, Thr-154, Arg-168, Asn-246, Thr-261, and Arg-325; these read DEGK and NAGH. Residue His-65 is the Proton donor of the active site. Residue 321–327 coordinates substrate; sequence VTTKRKR. GTP-binding positions include Arg-327, 353–355, and 436–438; these read KLD and GVG.

The protein belongs to the adenylosuccinate synthetase family. Homodimer. Requires Mg(2+) as cofactor.

The protein resides in the cytoplasm. It carries out the reaction IMP + L-aspartate + GTP = N(6)-(1,2-dicarboxyethyl)-AMP + GDP + phosphate + 2 H(+). It participates in purine metabolism; AMP biosynthesis via de novo pathway; AMP from IMP: step 1/2. Plays an important role in the de novo pathway and in the salvage pathway of purine nucleotide biosynthesis. Catalyzes the first committed step in the biosynthesis of AMP from IMP. The polypeptide is Adenylosuccinate synthetase (Drosophila virilis (Fruit fly)).